We begin with the raw amino-acid sequence, 372 residues long: uncharacterized protein (372 aa).

Positions 1-33 (MVRRALRLAAGTASLAAGTWLLRALHGTPAALG) are cleaved as a signal peptide.

To K.pneumoniae RomA.

This is an uncharacterized protein from Mycobacterium bovis (strain ATCC BAA-935 / AF2122/97).